The sequence spans 153 residues: MDQNEIETLQYYLKEYGQQAEVFAGQLELMENGRMEALAAIEALEALATSEDGTVLLQIGGGASLRAKVLEPEKVLLNIGSEVIVEKTSVDAIEYLKDRITELEASQKKVSEALEKLRAQTNEIAKRLEQGYRQAPGGSPVPHRHDHEDHDEE.

The interval 126-153 is disordered; sequence KRLEQGYRQAPGGSPVPHRHDHEDHDEE. Residues 143 to 153 are compositionally biased toward basic and acidic residues; sequence HRHDHEDHDEE.

The protein belongs to the prefoldin alpha subunit family. In terms of assembly, heterohexamer of two alpha and four beta subunits.

It is found in the cytoplasm. Its function is as follows. Molecular chaperone capable of stabilizing a range of proteins. Seems to fulfill an ATP-independent, HSP70-like function in archaeal de novo protein folding. In Methanoregula boonei (strain DSM 21154 / JCM 14090 / 6A8), this protein is Prefoldin subunit alpha.